A 455-amino-acid chain; its full sequence is UPF0210 protein Teth514_2074 (455 aa).

The protein belongs to the UPF0210 family. As to quaternary structure, homodimer.

The chain is UPF0210 protein Teth514_2074 from Thermoanaerobacter sp. (strain X514).